We begin with the raw amino-acid sequence, 804 residues long: DNA mismatch repair protein MutS (804 aa).

An ATP-binding site is contributed by 614-621 (GPNMAGKS).

Belongs to the DNA mismatch repair MutS family.

Its function is as follows. This protein is involved in the repair of mismatches in DNA. It is possible that it carries out the mismatch recognition step. This protein has a weak ATPase activity. This chain is DNA mismatch repair protein MutS, found in Ehrlichia ruminantium (strain Gardel).